A 228-amino-acid polypeptide reads, in one-letter code: Phosphoribosylformylglycinamidine synthase subunit PurQ (228 aa).

A Glutamine amidotransferase type-1 domain is found at 2-228 (TVVVVQFGGS…DGKGILQAFG (227 aa)). Residue C88 is the Nucleophile of the active site. Residues H205 and E207 contribute to the active site.

Part of the FGAM synthase complex composed of 1 PurL, 1 PurQ and 2 PurS subunits.

It localises to the cytoplasm. It carries out the reaction N(2)-formyl-N(1)-(5-phospho-beta-D-ribosyl)glycinamide + L-glutamine + ATP + H2O = 2-formamido-N(1)-(5-O-phospho-beta-D-ribosyl)acetamidine + L-glutamate + ADP + phosphate + H(+). The catalysed reaction is L-glutamine + H2O = L-glutamate + NH4(+). It functions in the pathway purine metabolism; IMP biosynthesis via de novo pathway; 5-amino-1-(5-phospho-D-ribosyl)imidazole from N(2)-formyl-N(1)-(5-phospho-D-ribosyl)glycinamide: step 1/2. Functionally, part of the phosphoribosylformylglycinamidine synthase complex involved in the purines biosynthetic pathway. Catalyzes the ATP-dependent conversion of formylglycinamide ribonucleotide (FGAR) and glutamine to yield formylglycinamidine ribonucleotide (FGAM) and glutamate. The FGAM synthase complex is composed of three subunits. PurQ produces an ammonia molecule by converting glutamine to glutamate. PurL transfers the ammonia molecule to FGAR to form FGAM in an ATP-dependent manner. PurS interacts with PurQ and PurL and is thought to assist in the transfer of the ammonia molecule from PurQ to PurL. This chain is Phosphoribosylformylglycinamidine synthase subunit PurQ, found in Haloquadratum walsbyi (strain DSM 16790 / HBSQ001).